The sequence spans 82 residues: uncharacterized protein (82 aa).

This is an uncharacterized protein from Orgyia pseudotsugata (Douglas-fir tussock moth).